We begin with the raw amino-acid sequence, 1440 residues long: Protein lin-15B (1440 aa).

4 disordered regions span residues 1–22 (MQTL…SSSS), 48–67 (ILRH…HLDA), 618–660 (PKEE…GRPI), and 738–769 (KDEP…PSSY). Low complexity predominate over residues 10 to 22 (TSNPASIPTSSSS). Low complexity predominate over residues 631 to 646 (STSSPATSSPTIIRPR). Positions 757-767 (NRTTASSQGPS) are enriched in polar residues. The THAP-type zinc-finger motif lies at 1135 to 1209 (NPGVCCFCSK…LLKGMIPDAA (75 aa)). 3 disordered regions span residues 1239-1281 (AIDL…EPSQ), 1298-1350 (RELS…GTSQ), and 1395-1440 (FADE…PSNE). A compositionally biased stretch (acidic residues) spans 1254-1264 (TQEEEEEEEYE). Residues 1317–1329 (PNPRGRPRKYPKN) constitute a DNA-binding region (a.T hook 1). Over residues 1396–1407 (ADEEEEEEEYEE) the composition is skewed to acidic residues. The a.T hook 2 DNA-binding region spans 1418–1430 (GRPVGRPRKDANK).

Functionally, synthetic multivulva (synMuv) class B protein. SynMuv proteins are required to repress the induction of vulval development. Acts redundantly with SynMuv class A protein lin-15A to negatively regulate vulval development. Regulates let-23 basal activity. The polypeptide is Protein lin-15B (Caenorhabditis elegans).